The following is a 219-amino-acid chain: ATP-dependent dethiobiotin synthetase BioD (219 aa).

14–19 provides a ligand contact to ATP; sequence DVGKTY. A Mg(2+)-binding site is contributed by T18. The active site involves K37. S41 provides a ligand contact to substrate. Residues D54, 114–117, and 175–176 each bind ATP; these read EGAG and NN. 2 residues coordinate Mg(2+): D54 and E114.

Belongs to the dethiobiotin synthetase family. In terms of assembly, homodimer. Mg(2+) is required as a cofactor.

It is found in the cytoplasm. The enzyme catalyses (7R,8S)-7,8-diammoniononanoate + CO2 + ATP = (4R,5S)-dethiobiotin + ADP + phosphate + 3 H(+). The protein operates within cofactor biosynthesis; biotin biosynthesis; biotin from 7,8-diaminononanoate: step 1/2. Catalyzes a mechanistically unusual reaction, the ATP-dependent insertion of CO2 between the N7 and N8 nitrogen atoms of 7,8-diaminopelargonic acid (DAPA, also called 7,8-diammoniononanoate) to form a ureido ring. The chain is ATP-dependent dethiobiotin synthetase BioD from Fusobacterium nucleatum subsp. nucleatum (strain ATCC 25586 / DSM 15643 / BCRC 10681 / CIP 101130 / JCM 8532 / KCTC 2640 / LMG 13131 / VPI 4355).